We begin with the raw amino-acid sequence, 532 residues long: Muscarinic acetylcholine receptor M5 (532 aa).

Over 1-29 (MEGDSYGNATTINGTPVNHQPLERHRLWE) the chain is Extracellular. The N-linked (GlcNAc...) asparagine glycan is linked to Asn8. A helical membrane pass occupies residues 30-53 (VITIAAVTAVVSLITIVGNVLVMI). Residues 54–66 (SFKVNSQLKTVNN) lie on the Cytoplasmic side of the membrane. The helical transmembrane segment at 67–87 (YYLLSLACADLIIGIFSMNLY) threads the bilayer. The Extracellular segment spans residues 88–104 (TTYILMGRWALGSLACD). Residues 105-126 (LWLALDYVASNASVMNLLVISF) form a helical membrane-spanning segment. Over 127–146 (DRYFSITRPLTYRAKRTPKR) the chain is Cytoplasmic. A helical transmembrane segment spans residues 147–169 (AGIMIGLAWLISFILWAPAILCW). The Extracellular portion of the chain corresponds to 170–191 (QYLVGKRTVPPDECQIQFLSEP). The helical transmembrane segment at 192–214 (TITFGTAIAAFYIPVSVMTILYC) threads the bilayer. Residues 215-443 (RIYRETEKRT…LVKERKAAQT (229 aa)) lie on the Cytoplasmic side of the membrane. Residues 263 to 294 (QRERNQASRSSSHRSTSITGKPSQATGPSTNW) form a disordered region. The segment covering 270–279 (SRSSSHRSTS) has biased composition (low complexity). Polar residues predominate over residues 280 to 294 (ITGKPSQATGPSTNW). A helical membrane pass occupies residues 444-464 (LSAILLAFIITWTPYNIMVLV). Residues 465-478 (STFCDKCVPVALWH) are Extracellular-facing. The chain crosses the membrane as a helical span at residues 479 to 498 (LGYWLCYVNSTVNPICYALC). Residues 499-532 (NRTFRKTFKMLLLCQWKKKKVEEKLYWQGNSKLP) are Cytoplasmic-facing. Phosphothreonine is present on residues Thr501 and Thr505.

The protein belongs to the G-protein coupled receptor 1 family. Muscarinic acetylcholine receptor subfamily. CHRM5 sub-subfamily.

The protein resides in the cell membrane. The protein localises to the postsynaptic cell membrane. The muscarinic acetylcholine receptor mediates various cellular responses, including inhibition of adenylate cyclase, breakdown of phosphoinositides and modulation of potassium channels through the action of G proteins. Primary transducing effect is Pi turnover. The chain is Muscarinic acetylcholine receptor M5 (CHRM5) from Saimiri boliviensis boliviensis (Bolivian squirrel monkey).